Consider the following 842-residue polypeptide: GPI ethanolamine phosphate transferase 2 (842 aa).

Asparagine 186 carries an N-linked (GlcNAc...) asparagine glycan. The helical transmembrane segment at 409–429 (YNYPLLFIGCFLSIVITGTIY) threads the bilayer. Residue asparagine 441 is glycosylated (N-linked (GlcNAc...) asparagine). 2 helical membrane-spanning segments follow: residues 442–462 (TSIL…SSFI) and 468–488 (FWWW…NFSS). Residue asparagine 506 is glycosylated (N-linked (GlcNAc...) asparagine). A helical membrane pass occupies residues 524–544 (GNIDALWWLNLITVTVVGLNL). Asparagine 551 carries N-linked (GlcNAc...) asparagine glycosylation. The chain crosses the membrane as a helical span at residues 554–574 (VSLLGFSDLLSMGLLSMITFL). Asparagine 578 carries N-linked (GlcNAc...) asparagine glycosylation. A run of 3 helical transmembrane segments spans residues 615-635 (IHTA…AVLV), 698-718 (YLLA…QSGG), and 740-760 (IYVV…YWSF). N-linked (GlcNAc...) asparagine glycosylation is present at asparagine 771. The next 2 helical transmembrane spans lie at 783–803 (YPFI…CIIL) and 821–841 (MVWT…LLLL).

The protein belongs to the PIGG/PIGN/PIGO family. PIGG subfamily.

The protein localises to the endoplasmic reticulum membrane. It functions in the pathway glycolipid biosynthesis; glycosylphosphatidylinositol-anchor biosynthesis. Functionally, ethanolamine phosphate transferase involved in glycosylphosphatidylinositol-anchor biosynthesis. Transfers ethanolamine phosphate to the GPI second mannose. This chain is GPI ethanolamine phosphate transferase 2 (LAS21), found in Candida glabrata (strain ATCC 2001 / BCRC 20586 / JCM 3761 / NBRC 0622 / NRRL Y-65 / CBS 138) (Yeast).